The chain runs to 256 residues: DNA repair protein RecO (256 aa).

It belongs to the RecO family.

Its function is as follows. Involved in DNA repair and RecF pathway recombination. The polypeptide is DNA repair protein RecO (Thiobacillus denitrificans (strain ATCC 25259 / T1)).